Reading from the N-terminus, the 110-residue chain is Insulin (110 aa).

The signal sequence occupies residues 1 to 24; sequence MALWTRLLPLLALLALLGPDPAQA. 3 disulfides stabilise this stretch: C31–C96, C43–C109, and C95–C100. The propeptide at 57-87 is c peptide; sequence EVEEQQGGQVELGGGPGAGLPQPLALEMALQ.

Belongs to the insulin family. In terms of assembly, heterodimer of a B chain and an A chain linked by two disulfide bonds.

It is found in the secreted. Functionally, insulin decreases blood glucose concentration. It increases cell permeability to monosaccharides, amino acids and fatty acids. It accelerates glycolysis, the pentose phosphate cycle, and glycogen synthesis in liver. The protein is Insulin (INS) of Ictidomys tridecemlineatus (Thirteen-lined ground squirrel).